The sequence spans 453 residues: Allantoinase (453 aa).

6 residues coordinate Zn(2+): H59, H61, K146, H186, H242, and D315. Position 146 is an N6-carboxylysine (K146).

This sequence belongs to the metallo-dependent hydrolases superfamily. Allantoinase family. In terms of assembly, homotetramer. It depends on Zn(2+) as a cofactor. In terms of processing, carboxylation allows a single lysine to coordinate two zinc ions.

The enzyme catalyses (S)-allantoin + H2O = allantoate + H(+). The protein operates within nitrogen metabolism; (S)-allantoin degradation; allantoate from (S)-allantoin: step 1/1. Functionally, catalyzes the conversion of allantoin (5-ureidohydantoin) to allantoic acid by hydrolytic cleavage of the five-member hydantoin ring. This is Allantoinase from Escherichia coli (strain SMS-3-5 / SECEC).